We begin with the raw amino-acid sequence, 199 residues long: Recombination protein RecR (199 aa).

The segment at Cys-57–Cys-72 adopts a C4-type zinc-finger fold. The Toprim domain occupies Ser-81–Pro-176.

The protein belongs to the RecR family.

May play a role in DNA repair. It seems to be involved in an RecBC-independent recombinational process of DNA repair. It may act with RecF and RecO. The polypeptide is Recombination protein RecR (Shewanella baltica (strain OS155 / ATCC BAA-1091)).